The sequence spans 122 residues: U1 small nuclear ribonucleoprotein C (122 aa).

The segment at Tyr-4–Met-36 adopts a Matrin-type zinc-finger fold.

Belongs to the U1 small nuclear ribonucleoprotein C family. In terms of assembly, U1 snRNP is composed of the 7 core Sm proteins B/B', D1, D2, D3, E, F and G that assemble in a heptameric protein ring on the Sm site of the small nuclear RNA to form the core snRNP, and at least 3 U1 snRNP-specific proteins U1-70K, U1-A and U1-C. U1-C interacts with U1 snRNA and the 5' splice-site region of the pre-mRNA.

Its subcellular location is the nucleus. Component of the spliceosomal U1 snRNP, which is essential for recognition of the pre-mRNA 5' splice-site and the subsequent assembly of the spliceosome. U1-C is directly involved in initial 5' splice-site recognition for both constitutive and regulated alternative splicing. The interaction with the 5' splice-site seems to precede base-pairing between the pre-mRNA and the U1 snRNA. Stimulates commitment or early (E) complex formation by stabilizing the base pairing of the 5' end of the U1 snRNA and the 5' splice-site region. This chain is U1 small nuclear ribonucleoprotein C, found in Ciona intestinalis (Transparent sea squirt).